We begin with the raw amino-acid sequence, 304 residues long: Transcription factor bHLH94 (304 aa).

Residues 86 to 107 (VESHPPPQHRRKRRRTRNCKNK) are disordered. Residues 92 to 104 (PQHRRKRRRTRNC) are compositionally biased toward basic residues. Residues 112–163 (NQRMTHIAVERNRRKQMNEYLAVLRSLMPSSYAQRGDQASIVGGAINYVKEL) form the bHLH domain.

As to quaternary structure, homodimer. As to expression, expressed constitutively in roots, leaves, stems, and flowers.

It is found in the nucleus. This Arabidopsis thaliana (Mouse-ear cress) protein is Transcription factor bHLH94 (BHLH94).